Here is a 367-residue protein sequence, read N- to C-terminus: MLLLRCQLKQAPPQKVSFRFCVVMGKQQSKLKHSTYKYGRPDEIIEERIQTKAFQEYSPAHMDTVSVVAALNSDLCVSGGKDKTVVAYNWKTGNVVKRFKGHEHEITKVACIPKSSQFFSASRDRMVMMWDLHGSSQPRQQLCGHAMVVTGLAVSPDSSQLCTGSRDNTLLLWDVVTGQSVERASVSRNVVTHLCWVPREPYILQTSEDKTLRLWDSRGLQVAHMFPAKQHIQTYCEVSVDGHKCISCSNGFGGEGCEATLWDLRQTRNRICEYKGHFQTVASCVFLPRALALMPLIATSSHDCKVKIWNQDTGACLFTLSLDGSGPLTSLAVGDAISLLCASFNRGIHLLRMDHSQGLELQEVAAF.

WD repeat units lie at residues 53–90, 94–132, 137–175, 179–217, 221–264, 269–311, and 315–353; these read AFQEYSPAHMDTVSVVAALNSDLCVSGGKDKTVVAYNW, NVVKRFKGHEHEITKVACIPKSSQFFSASRDRMVMMWDL, QPRQQLCGHAMVVTGLAVSPDSSQLCTGSRDNTLLLWDV, QSVERASVSRNVVTHLCWVPREPYILQTSEDKTLRLWDS, QVAH…LWDL, NRIC…IWNQ, and ACLFTLSLDGSGPLTSLAVGDAISLLCASFNRGIHLLRM.

This chain is WD repeat-containing protein 31 (WDR31), found in Homo sapiens (Human).